The primary structure comprises 133 residues: Small ribosomal subunit protein uS8 (133 aa).

It belongs to the universal ribosomal protein uS8 family. As to quaternary structure, part of the 30S ribosomal subunit.

One of the primary rRNA binding proteins, it binds directly to 16S rRNA central domain where it helps coordinate assembly of the platform of the 30S subunit. The sequence is that of Small ribosomal subunit protein uS8 from Aeropyrum pernix (strain ATCC 700893 / DSM 11879 / JCM 9820 / NBRC 100138 / K1).